The sequence spans 276 residues: Glucosamine-6-phosphate deaminase 2 (276 aa).

Catalysis depends on D72, which acts as the Proton acceptor; for enolization step. The stretch at 105 to 130 forms a coiled coil; it reads HILDGNAADLQAECDAFENKIKEAGG. D141 (for ring-opening step) is an active-site residue. H143 (proton acceptor; for ring-opening step) is an active-site residue. Catalysis depends on E148, which acts as the For ring-opening step. The residue at position 161 (T161) is a Phosphothreonine.

The protein belongs to the glucosamine/galactosamine-6-phosphate isomerase family. Homohexamer. As to expression, ubiquitous, with highest expression detected in testis, ovary, placenta, and heart.

The protein localises to the cytoplasm. It carries out the reaction alpha-D-glucosamine 6-phosphate + H2O = beta-D-fructose 6-phosphate + NH4(+). The protein operates within nucleotide-sugar biosynthesis; UDP-N-acetyl-alpha-D-glucosamine biosynthesis; alpha-D-glucosamine 6-phosphate from D-fructose 6-phosphate: step 1/1. With respect to regulation, allosterically activated by N-acetylglucosamine-6-phosphate (GlcNAc6P). Its function is as follows. Catalyzes the reversible conversion of alpha-D-glucosamine 6-phosphate (GlcN-6P) into beta-D-fructose 6-phosphate (Fru-6P) and ammonium ion, a regulatory reaction step in de novo uridine diphosphate-N-acetyl-alpha-D-glucosamine (UDP-GlcNAc) biosynthesis via hexosamine pathway. Deamination is coupled to aldo-keto isomerization mediating the metabolic flux from UDP-GlcNAc toward Fru-6P. At high ammonium level can drive amination and isomerization of Fru-6P toward hexosamines and UDP-GlcNAc synthesis. Has a role in fine tuning the metabolic fluctuations of cytosolic UDP-GlcNAc and their effects on hyaluronan synthesis that occur during tissue remodeling. This Homo sapiens (Human) protein is Glucosamine-6-phosphate deaminase 2.